A 191-amino-acid polypeptide reads, in one-letter code: Probable terminase, small subunit gp27 (191 aa).

This sequence belongs to the mulikevirus small terminase family. In terms of assembly, heterodimer with the terminase large subunit gp28; the active complex is probably heterooligomeric.

Its subcellular location is the host cytoplasm. Its function is as follows. The terminase small subunit binds to the packaging initiation site (pac) and regulates the ATPase activity of the terminase large subunit. The terminase lies at a unique vertex of the procapsid and is composed of two subunits, a small terminase subunit involved in viral DNA recognition (packaging sequence), and a large terminase subunit possessing endonucleolytic and ATPase activities. Both terminase subunits heterooligomerize and are docked on the portal protein to form the packaging machine. The terminase large subunit exhibits endonuclease activity and cleaves the viral genome concatemer once the capsid is full (headful packaging). Once the capsid is packaged with the DNA, the terminase complex is substituted by neck proteins. This chain is Probable terminase, small subunit gp27, found in Enterobacteriaceae (Bacteriophage Mu).